Reading from the N-terminus, the 179-residue chain is Protein HoxT (179 aa).

The protein is Protein HoxT (hoxT) of Cupriavidus necator (strain ATCC 17699 / DSM 428 / KCTC 22496 / NCIMB 10442 / H16 / Stanier 337) (Ralstonia eutropha).